The following is a 1432-amino-acid chain: Gag-Pol polyprotein (1432 aa).

2 CCHC-type zinc fingers span residues Gln-368–Asn-385 and Gln-386–Ser-403. The Peptidase A2 domain maps to Val-452 to Val-525. Asp-457 (for protease activity; shared with dimeric partner) is an active-site residue. In terms of domain architecture, Reverse transcriptase spans Asp-579–Leu-766. Mg(2+) is bound by residues Asp-645, Asp-720, and Asp-721. A coiled-coil region spans residues Lys-815–Asp-843. The RNase H type-1 domain occupies Ile-959–Gln-1079. Positions 968, 999, 1019, and 1071 each coordinate Mg(2+). The segment at Glu-1157–Lys-1198 adopts an Integrase-type zinc-finger fold. 4 residues coordinate Zn(2+): His-1166, His-1170, Cys-1194, and Cys-1197. The Integrase catalytic domain maps to Arg-1206 to Glu-1358. Residues Asp-1219 and Asp-1271 each coordinate Mg(2+). Positions Lys-1376 to Pro-1422 form a DNA-binding region, integrase-type.

Post-translationally, specific enzymatic cleavages by the viral protease yield mature proteins. The protease is released by autocatalytic cleavage. The polyprotein is cleaved during and after budding, this process is termed maturation.

The protein localises to the virion. It carries out the reaction DNA(n) + a 2'-deoxyribonucleoside 5'-triphosphate = DNA(n+1) + diphosphate. The catalysed reaction is Endohydrolysis of RNA in RNA/DNA hybrids. Three different cleavage modes: 1. sequence-specific internal cleavage of RNA. Human immunodeficiency virus type 1 and Moloney murine leukemia virus enzymes prefer to cleave the RNA strand one nucleotide away from the RNA-DNA junction. 2. RNA 5'-end directed cleavage 13-19 nucleotides from the RNA end. 3. DNA 3'-end directed cleavage 15-20 nucleotides away from the primer terminus.. It catalyses the reaction 3'-end directed exonucleolytic cleavage of viral RNA-DNA hybrid.. Functionally, matrix protein p16 forms the outer shell of the core of the virus, lining the inner surface of the viral membrane. Its function is as follows. Capsid protein p26 forms the conical core of the virus that encapsulates the genomic RNA-nucleocapsid complex. In terms of biological role, the aspartyl protease mediates proteolytic cleavages of Gag and Gag-Pol polyproteins during or shortly after the release of the virion from the plasma membrane. Cleavages take place as an ordered, step-wise cascade to yield mature proteins. This process is called maturation. Displays maximal activity during the budding process just prior to particle release from the cell. Reverse transcriptase/ribonuclease H (RT) is a multifunctional enzyme that converts the viral RNA genome into dsDNA in the cytoplasm, shortly after virus entry into the cell. This enzyme displays a DNA polymerase activity that can copy either DNA or RNA templates, and a ribonuclease H (RNase H) activity that cleaves the RNA strand of RNA-DNA heteroduplexes in a partially processive 3' to 5' endonucleasic mode. Conversion of viral genomic RNA into dsDNA requires many steps. A tRNA binds to the primer-binding site (PBS) situated at the 5'-end of the viral RNA. RT uses the 3' end of the tRNA primer to perform a short round of RNA-dependent minus-strand DNA synthesis. The reading proceeds through the U5 region and ends after the repeated (R) region which is present at both ends of viral RNA. The portion of the RNA-DNA heteroduplex is digested by the RNase H, resulting in a ssDNA product attached to the tRNA primer. This ssDNA/tRNA hybridizes with the identical R region situated at the 3' end of viral RNA. This template exchange, known as minus-strand DNA strong stop transfer, can be either intra- or intermolecular. RT uses the 3' end of this newly synthesized short ssDNA to perform the RNA-dependent minus-strand DNA synthesis of the whole template. RNase H digests the RNA template except for a polypurine tract (PPT) situated at the 5'-end of the genome. It is not clear if both polymerase and RNase H activities are simultaneous. RNase H probably can proceed both in a polymerase-dependent (RNA cut into small fragments by the same RT performing DNA synthesis) and a polymerase-independent mode (cleavage of remaining RNA fragments by free RTs). Secondly, RT performs DNA-directed plus-strand DNA synthesis using the PPT that has not been removed by RNase H as primer. PPT and tRNA primers are then removed by RNase H. The 3' and 5' ssDNA PBS regions hybridize to form a circular dsDNA intermediate. Strand displacement synthesis by RT to the PBS and PPT ends produces a blunt ended, linear dsDNA copy of the viral genome that includes long terminal repeats (LTRs) at both ends. Functionally, integrase catalyzes viral DNA integration into the host chromosome, by performing a series of DNA cutting and joining reactions. This enzyme activity takes place after virion entry into a cell and reverse transcription of the RNA genome in dsDNA. This is Gag-Pol polyprotein (gag-pol) from Jembrana disease virus (JDV).